The sequence spans 211 residues: Ribosomal RNA small subunit methyltransferase G (211 aa).

Residues G81, L86, 132–133, and R147 contribute to the S-adenosyl-L-methionine site; that span reads VE.

The protein belongs to the methyltransferase superfamily. RNA methyltransferase RsmG family.

It is found in the cytoplasm. The catalysed reaction is guanosine(527) in 16S rRNA + S-adenosyl-L-methionine = N(7)-methylguanosine(527) in 16S rRNA + S-adenosyl-L-homocysteine. Specifically methylates the N7 position of guanine in position 527 of 16S rRNA. In Actinobacillus succinogenes (strain ATCC 55618 / DSM 22257 / CCUG 43843 / 130Z), this protein is Ribosomal RNA small subunit methyltransferase G.